A 344-amino-acid chain; its full sequence is Protein RecA (344 aa).

66 to 73 (GPESSGKT) provides a ligand contact to ATP.

It belongs to the RecA family.

It localises to the cytoplasm. In terms of biological role, can catalyze the hydrolysis of ATP in the presence of single-stranded DNA, the ATP-dependent uptake of single-stranded DNA by duplex DNA, and the ATP-dependent hybridization of homologous single-stranded DNAs. It interacts with LexA causing its activation and leading to its autocatalytic cleavage. In Methylobacillus flagellatus (strain ATCC 51484 / DSM 6875 / VKM B-1610 / KT), this protein is Protein RecA.